Consider the following 218-residue polypeptide: Pyridoxine/pyridoxamine 5'-phosphate oxidase (218 aa).

Substrate contacts are provided by residues 14-17 and K72; that span reads RREY. FMN-binding positions include 67–72, 82–83, R88, K89, and Q111; these read RIVLLK and YT. Y129, R133, and S137 together coordinate substrate. Residues 146-147 and W191 contribute to the FMN site; that span reads QS. 197 to 199 contacts substrate; that stretch reads RLH. R201 provides a ligand contact to FMN.

This sequence belongs to the pyridoxamine 5'-phosphate oxidase family. Homodimer. FMN is required as a cofactor.

The catalysed reaction is pyridoxamine 5'-phosphate + O2 + H2O = pyridoxal 5'-phosphate + H2O2 + NH4(+). It carries out the reaction pyridoxine 5'-phosphate + O2 = pyridoxal 5'-phosphate + H2O2. Its pathway is cofactor metabolism; pyridoxal 5'-phosphate salvage; pyridoxal 5'-phosphate from pyridoxamine 5'-phosphate: step 1/1. It participates in cofactor metabolism; pyridoxal 5'-phosphate salvage; pyridoxal 5'-phosphate from pyridoxine 5'-phosphate: step 1/1. Functionally, catalyzes the oxidation of either pyridoxine 5'-phosphate (PNP) or pyridoxamine 5'-phosphate (PMP) into pyridoxal 5'-phosphate (PLP). This chain is Pyridoxine/pyridoxamine 5'-phosphate oxidase, found in Citrobacter koseri (strain ATCC BAA-895 / CDC 4225-83 / SGSC4696).